Consider the following 327-residue polypeptide: Zinc transport protein ZntB (327 aa).

At 1–271 the chain is on the cytoplasmic side; it reads METIYGSSLK…AMNRRTYTMS (271 aa). A helical transmembrane segment spans residues 272–292; it reads LLAMIFLPTTFLTGLFGVNLG. Over 293–300 the chain is Periplasmic; sequence GIPGNEYY. Residues 301–321 form a helical membrane-spanning segment; that stretch reads LGFAIFCLLLFGLVLFVAWWL. The Cytoplasmic segment spans residues 322-327; the sequence is KKSKWL.

Belongs to the CorA metal ion transporter (MIT) (TC 1.A.35) family.

It localises to the cell inner membrane. It carries out the reaction Zn(2+)(out) + H(+)(out) = Zn(2+)(in) + H(+)(in). Functionally, zinc transporter. Acts as a Zn(2+):proton symporter, which likely mediates zinc ion uptake. The chain is Zinc transport protein ZntB from Photorhabdus laumondii subsp. laumondii (strain DSM 15139 / CIP 105565 / TT01) (Photorhabdus luminescens subsp. laumondii).